A 406-amino-acid chain; its full sequence is UPF0754 membrane protein Cyan7425_4067 (406 aa).

A helical membrane pass occupies residues 381–401 (IVTLGGVLGLLIGIAQSVLLL).

It belongs to the UPF0754 family.

Its subcellular location is the cell inner membrane. This is UPF0754 membrane protein Cyan7425_4067 from Cyanothece sp. (strain PCC 7425 / ATCC 29141).